The sequence spans 262 residues: Polyamine aminopropyltransferase (262 aa).

The 249-residue stretch at 1–249 folds into the PABS domain; sequence MWITQEITPY…DIHRAAFALP (249 aa). Asn29 provides a ligand contact to S-methyl-5'-thioadenosine. Asp83 provides a ligand contact to spermidine. Asp155 acts as the Proton acceptor in catalysis.

In terms of assembly, homodimer.

It is found in the cytoplasm. It catalyses the reaction S-adenosyl 3-(methylsulfanyl)propylamine + putrescine = S-methyl-5'-thioadenosine + spermidine + H(+). It functions in the pathway amine and polyamine biosynthesis; spermidine biosynthesis; spermidine from putrescine: step 1/1. Its activity is regulated as follows. Inhibited by methylglyoxal bis(cyclopentylamidinohydrazone)(MGBCP). Its function is as follows. Involved in the cell growth and proliferation. Catalyzes the irreversible transfer of a propylamine group from the amino donor S-adenosylmethioninamine (decarboxy-AdoMet) to putrescine (1,4-diaminobutane) to yield spermidine. Spermidine cannot be used as an aminopropyl acceptor. This is Polyamine aminopropyltransferase from Helicobacter pylori (strain ATCC 700392 / 26695) (Campylobacter pylori).